The chain runs to 251 residues: Ubiquinone/menaquinone biosynthesis C-methyltransferase UbiE (251 aa).

S-adenosyl-L-methionine-binding residues include Thr74, Asp92, and Ser132.

Belongs to the class I-like SAM-binding methyltransferase superfamily. MenG/UbiE family.

The catalysed reaction is a 2-demethylmenaquinol + S-adenosyl-L-methionine = a menaquinol + S-adenosyl-L-homocysteine + H(+). It carries out the reaction a 2-methoxy-6-(all-trans-polyprenyl)benzene-1,4-diol + S-adenosyl-L-methionine = a 5-methoxy-2-methyl-3-(all-trans-polyprenyl)benzene-1,4-diol + S-adenosyl-L-homocysteine + H(+). The protein operates within quinol/quinone metabolism; menaquinone biosynthesis; menaquinol from 1,4-dihydroxy-2-naphthoate: step 2/2. It participates in cofactor biosynthesis; ubiquinone biosynthesis. In terms of biological role, methyltransferase required for the conversion of demethylmenaquinol (DMKH2) to menaquinol (MKH2) and the conversion of 2-polyprenyl-6-methoxy-1,4-benzoquinol (DDMQH2) to 2-polyprenyl-3-methyl-6-methoxy-1,4-benzoquinol (DMQH2). This is Ubiquinone/menaquinone biosynthesis C-methyltransferase UbiE from Rubrivivax gelatinosus (strain NBRC 100245 / IL144).